A 277-amino-acid chain; its full sequence is Putative phosphoenolpyruvate synthase regulatory protein (277 aa).

157–164 (GVSRCGKT) serves as a coordination point for ADP.

This sequence belongs to the pyruvate, phosphate/water dikinase regulatory protein family. PSRP subfamily.

The catalysed reaction is [pyruvate, water dikinase] + ADP = [pyruvate, water dikinase]-phosphate + AMP + H(+). The enzyme catalyses [pyruvate, water dikinase]-phosphate + phosphate + H(+) = [pyruvate, water dikinase] + diphosphate. Functionally, bifunctional serine/threonine kinase and phosphorylase involved in the regulation of the phosphoenolpyruvate synthase (PEPS) by catalyzing its phosphorylation/dephosphorylation. This is Putative phosphoenolpyruvate synthase regulatory protein from Citrobacter koseri (strain ATCC BAA-895 / CDC 4225-83 / SGSC4696).